A 147-amino-acid polypeptide reads, in one-letter code: UPF0306 protein YhbP (147 aa).

This sequence belongs to the UPF0306 family.

This is UPF0306 protein YhbP from Escherichia coli O8 (strain IAI1).